The chain runs to 81 residues: HssA/B-like protein 5 (81 aa).

The protein belongs to the hssA/B family.

The chain is HssA/B-like protein 5 (hssl5) from Dictyostelium discoideum (Social amoeba).